The following is a 599-amino-acid chain: Elongation factor 4 (599 aa).

The 183-residue stretch at 2 to 184 folds into the tr-type G domain; it reads KHIRNFSIIA…RLVRDIPPPE (183 aa). GTP-binding positions include 14–19 and 131–134; these read DHGKST and NKID.

This sequence belongs to the TRAFAC class translation factor GTPase superfamily. Classic translation factor GTPase family. LepA subfamily.

The protein localises to the cell inner membrane. The catalysed reaction is GTP + H2O = GDP + phosphate + H(+). In terms of biological role, required for accurate and efficient protein synthesis under certain stress conditions. May act as a fidelity factor of the translation reaction, by catalyzing a one-codon backward translocation of tRNAs on improperly translocated ribosomes. Back-translocation proceeds from a post-translocation (POST) complex to a pre-translocation (PRE) complex, thus giving elongation factor G a second chance to translocate the tRNAs correctly. Binds to ribosomes in a GTP-dependent manner. In Pectobacterium carotovorum subsp. carotovorum (strain PC1), this protein is Elongation factor 4.